Consider the following 465-residue polypeptide: tRNA-2-methylthio-N(6)-dimethylallyladenosine synthase (465 aa).

Positions 18-136 (RKLYIETYGC…LPNLVGAAEQ (119 aa)) constitute an MTTase N-terminal domain. Residues Cys27, Cys63, Cys100, Cys174, Cys178, and Cys181 each coordinate [4Fe-4S] cluster. In terms of domain architecture, Radical SAM core spans 160–392 (GGVHINGFVS…IALQNRLSEE (233 aa)). A TRAM domain is found at 395 to 458 (KRDISKTFEV…SATLFGEVVE (64 aa)).

The protein belongs to the methylthiotransferase family. MiaB subfamily. Monomer. It depends on [4Fe-4S] cluster as a cofactor.

The protein localises to the cytoplasm. The enzyme catalyses N(6)-dimethylallyladenosine(37) in tRNA + (sulfur carrier)-SH + AH2 + 2 S-adenosyl-L-methionine = 2-methylsulfanyl-N(6)-dimethylallyladenosine(37) in tRNA + (sulfur carrier)-H + 5'-deoxyadenosine + L-methionine + A + S-adenosyl-L-homocysteine + 2 H(+). Catalyzes the methylthiolation of N6-(dimethylallyl)adenosine (i(6)A), leading to the formation of 2-methylthio-N6-(dimethylallyl)adenosine (ms(2)i(6)A) at position 37 in tRNAs that read codons beginning with uridine. The sequence is that of tRNA-2-methylthio-N(6)-dimethylallyladenosine synthase from Porphyromonas gingivalis (strain ATCC 33277 / DSM 20709 / CIP 103683 / JCM 12257 / NCTC 11834 / 2561).